Here is a 267-residue protein sequence, read N- to C-terminus: tRNA pseudouridine synthase A (267 aa).

Aspartate 51 acts as the Nucleophile in catalysis. Tyrosine 109 serves as a coordination point for substrate.

It belongs to the tRNA pseudouridine synthase TruA family. As to quaternary structure, homodimer.

It catalyses the reaction uridine(38/39/40) in tRNA = pseudouridine(38/39/40) in tRNA. Functionally, formation of pseudouridine at positions 38, 39 and 40 in the anticodon stem and loop of transfer RNAs. The protein is tRNA pseudouridine synthase A of Staphylococcus aureus (strain Mu3 / ATCC 700698).